We begin with the raw amino-acid sequence, 199 residues long: Superoxide dismutase [Mn/Fe] 2 (199 aa).

Fe(3+)-binding residues include histidine 27, histidine 81, aspartate 161, and histidine 165. The Mn(2+) site is built by histidine 27, histidine 81, aspartate 161, and histidine 165.

Belongs to the iron/manganese superoxide dismutase family. Homodimer. Can also form a heterodimer with SodA. Requires Mn(2+) as cofactor. Fe(3+) serves as cofactor.

It catalyses the reaction 2 superoxide + 2 H(+) = H2O2 + O2. Destroys superoxide anion radicals which are normally produced within the cells and which are toxic to biological systems. Catalyzes the dismutation of superoxide anion radicals into O2 and H2O2 by successive reduction and oxidation of the transition metal ion at the active site. This chain is Superoxide dismutase [Mn/Fe] 2 (sodM), found in Staphylococcus aureus (strain USA300).